We begin with the raw amino-acid sequence, 468 residues long: Glutamate--tRNA ligase (468 aa).

The 'HIGH' region motif lies at 8 to 18 (PSPTGFLHVGG). The Zn(2+) site is built by Cys97, Cys99, Cys124, and Asp126. The short motif at 236 to 240 (KLSKR) is the 'KMSKS' region element. Lys239 contacts ATP.

This sequence belongs to the class-I aminoacyl-tRNA synthetase family. Glutamate--tRNA ligase type 1 subfamily. As to quaternary structure, monomer. Zn(2+) serves as cofactor.

The protein resides in the cytoplasm. It carries out the reaction tRNA(Glu) + L-glutamate + ATP = L-glutamyl-tRNA(Glu) + AMP + diphosphate. Functionally, catalyzes the attachment of glutamate to tRNA(Glu) in a two-step reaction: glutamate is first activated by ATP to form Glu-AMP and then transferred to the acceptor end of tRNA(Glu). The sequence is that of Glutamate--tRNA ligase from Francisella tularensis subsp. novicida (strain U112).